The following is a 763-amino-acid chain: MRFNHFSIVDKNFDEQLAELDQLGFRWSVFWDEKKILKDFLIQSPSDMTDLQATAELDVIEFLKSSIELDWEIFWNIALQLLDFVPNFDFEIGKAFEYAKNSNLPQIEAEMTTENIISAFYYLLCTRRKNGMILVEHWVSEGLLPLDNHYHFFNDKSLATFDSSLLEREVLWVESPVDSEQRGENDLIKIQIIRPKSTEKLPVVMTASPYHLGINDKANDLALHDMNVELEEKASHEIHVEQKLPQKLSAKAKELPIVDKAPYRFTHGWTYSLNDYFLTRGFASIYVAGVGTRSSDGFQTSGDYQQIYSMTAVIDWLNGRARAYTSRKKTHEIKASWANGKVAMTGKSYLGTMAYGAATTGVEGLEVILAEAGISSWYNYYRENGLVRSPGGFPGEDLDVLAALTYSRNLDGADFLKGNAEYEKRLAEMTAALDRKSGDYNQFWHDRNYLINTDKVKADVLIVHGLQDWNVTPEQAYNFWKALPEGHAKHAFLHRGAHIYMNSWQSIDFSETINAYFVAKLLDRDLNLNLPPVILQENSKDQVWTMMNDFGANTQIKLPLGKTAVSFAQFDNHYDDETFKKYSKDFNVFKKDLFENKANEAVIDLELPSMLTINGPVELELRLKLNDTKGFLSAQILDFGQKKRLEDKARVKDFKVLDRGRNFMLDDLVELPLVESPYQLITKGFTNLQNQNLLTVSDLKADEWFTIKFELQPTIYHLEKADKLRVILYSTDFEHTVRDNRKVTYEIDLSQSKLIIPIESVKN.

Active-site charge relay system residues include Ser-348, Asp-468, and His-498.

It belongs to the peptidase S15 family. In terms of assembly, homodimer.

The protein localises to the cytoplasm. It catalyses the reaction Hydrolyzes Xaa-Pro-|- bonds to release unblocked, N-terminal dipeptides from substrates including Ala-Pro-|-p-nitroanilide and (sequentially) Tyr-Pro-|-Phe-Pro-|-Gly-Pro-|-Ile.. In terms of biological role, removes N-terminal dipeptides sequentially from polypeptides having unsubstituted N-termini provided that the penultimate residue is proline. In Lactococcus lactis subsp. cremoris (strain SK11), this protein is Xaa-Pro dipeptidyl-peptidase.